Here is a 413-residue protein sequence, read N- to C-terminus: MKTALLSIGDELLLGEVVDTNSARIAARLADEGIVTARKLTVGDDEGEIAGALEELARGHDVVIATGGLGPTDDDVTARAAARATGRRLVLNEEAMGHLREFFVRLGREMHPANGRQCLLPAKAELIPNPTGTASGFYLPLDRCLLMFLPGVPSEMAVMLDETVVPLVLERRGEHRRTRTLTLTVFGLSEAEIGARLSDLDRSRPGLTVAYCVEYPVVQVKLRATGEDEGALTALLEDGAALVRERLGGHVVAGDGETIDTTVARLFRETGMTLALAESCTGGLIAGRVTAIPGSSAYFFLSAVTYANDAKARLLGVPQGLLAETGAVSAEVAKAMARGARQLAGSDLALAVTGIAGPEGGSPDKPVGTVFIALADQAGCSAKGYHFRGDRDRIRTITAVTAMDWLRRRLLSH.

This sequence belongs to the CinA family.

The polypeptide is CinA-like protein (Geobacter metallireducens (strain ATCC 53774 / DSM 7210 / GS-15)).